The primary structure comprises 195 residues: Holliday junction branch migration complex subunit RuvA (195 aa).

The segment at 1 to 64 (MIASIRGVIQ…EDALTLYGFS (64 aa)) is domain I. The interval 65–139 (DNAQRSLFEQ…GKIDFRQLAA (75 aa)) is domain II. The interval 139-143 (ASGST) is flexible linker. The domain III stretch occupies residues 144 to 195 (SVSALDRELSEILVSLGYSAAEAAAAIASLPSDAPPTLEERLRLALRYFGSA).

It belongs to the RuvA family. In terms of assembly, homotetramer. Forms an RuvA(8)-RuvB(12)-Holliday junction (HJ) complex. HJ DNA is sandwiched between 2 RuvA tetramers; dsDNA enters through RuvA and exits via RuvB. An RuvB hexamer assembles on each DNA strand where it exits the tetramer. Each RuvB hexamer is contacted by two RuvA subunits (via domain III) on 2 adjacent RuvB subunits; this complex drives branch migration. In the full resolvosome a probable DNA-RuvA(4)-RuvB(12)-RuvC(2) complex forms which resolves the HJ.

It is found in the cytoplasm. Functionally, the RuvA-RuvB-RuvC complex processes Holliday junction (HJ) DNA during genetic recombination and DNA repair, while the RuvA-RuvB complex plays an important role in the rescue of blocked DNA replication forks via replication fork reversal (RFR). RuvA specifically binds to HJ cruciform DNA, conferring on it an open structure. The RuvB hexamer acts as an ATP-dependent pump, pulling dsDNA into and through the RuvAB complex. HJ branch migration allows RuvC to scan DNA until it finds its consensus sequence, where it cleaves and resolves the cruciform DNA. This Chloroflexus aggregans (strain MD-66 / DSM 9485) protein is Holliday junction branch migration complex subunit RuvA.